We begin with the raw amino-acid sequence, 342 residues long: MSVMAAMGGAQVLSSTGAFADPAPDAVAQQWAIFRAKYLRPSGRVVDTGNGGESHSEGQGYGMLFAASAGDLASFQSMWMWARTNLQHTNDKLFSWRFLKGHQPPVPDKNNATDGDLLIALALGRAGKRFQRPDYIQDAMAIYGDVLNLMTMKAGPYVVLMPGAVGFTKKDSVILNLSYYVMPSLLQAFDLTADPRWRQVMEDGIRLVSAGRFGQWRLPPDWLAVNRATGALSIASGWPPRFSYDAIRVPLYFYWAHMLAPNVLADFTRFWNNFGANALPGWVDLTTGARSPYNAPPGYLAVAECTGLDSAGELPTLDHAPDYYSAALTLLVYIARAEETIK.

The N-terminal stretch at 1 to 20 (MSVMAAMGGAQVLSSTGAFA) is a signal peptide. Glu-57 (proton donor) is an active-site residue. The active-site Nucleophile is the Asp-114.

Belongs to the glycosyl hydrolase 8 (cellulase D) family.

It localises to the secreted. The enzyme catalyses Endohydrolysis of (1-&gt;4)-beta-D-glucosidic linkages in cellulose, lichenin and cereal beta-D-glucans.. Its function is as follows. Enzyme capable of hydrolyzing carboxy-methyl-cellulose (CMC). This chain is Probable endoglucanase (cmcAX), found in Novacetimonas hansenii (Komagataeibacter hansenii).